The following is a 530-amino-acid chain: Purine-cytosine permease FCY22 (530 aa).

A Phosphothreonine modification is found at threonine 46. Transmembrane regions (helical) follow at residues 96–116 (MVIV…LNFG), 119–139 (VLVI…FSLF), 162–182 (FFSL…ISVS), 197–217 (CPIW…TFFG), 220–240 (VVHA…LVII), 263–283 (GVLS…TYAA), 298–318 (IFFS…ILGA), 345–365 (AILV…LLAL), 372–392 (VPGM…LAKI), 396–416 (VWTM…TYYF), 418–438 (GFME…IAIA), and 463–483 (LPIG…VALG).

The protein belongs to the purine-cytosine permease (2.A.39) family.

The protein localises to the membrane. Its function is as follows. Probable purine-cytosine permease. This is Purine-cytosine permease FCY22 (FCY22) from Saccharomyces cerevisiae (strain ATCC 204508 / S288c) (Baker's yeast).